Reading from the N-terminus, the 288-residue chain is Wilms tumor protein homolog (288 aa).

A disordered region spans residues 1–21; the sequence is QGYSTVAFDGPPSYGHAPSHH. The 9aaTAD motif lies at 90 to 98; that stretch reads MTWNQMNLG. C2H2-type zinc fingers lie at residues 162-186, 192-216, and 222-244; these read FMCA…SRKH, YQCD…QRRH, and FQCK…TRTH. Important for interaction with target DNA regions lie at residues 206 to 220 and 232 to 240; these read SDQL…TGVK and SRSDHLKTH. The KTS motif signature appears at 247–249; the sequence is KTS. Residues 253-277 form a C2H2-type 4 zinc finger; it reads FSCRWPSCQKKFARSDELVRHHNMH.

Belongs to the EGR C2H2-type zinc-finger protein family.

It localises to the nucleus speckle. The protein resides in the nucleus. The protein localises to the nucleoplasm. Its subcellular location is the cytoplasm. In terms of biological role, transcription factor that plays an important role in cellular development and cell survival. Recognizes and binds to the DNA sequence 5'-GCG(T/G)GGGCG-3'. Regulates the expression of numerous target genes. Plays an essential role for development of the urogenital system. It has a tumor suppressor as well as an oncogenic role in tumor formation. Function may be isoform-specific: isoforms lacking the KTS motif may act as transcription factors. Isoforms containing the KTS motif may bind mRNA and play a role in mRNA metabolism or splicing. The sequence is that of Wilms tumor protein homolog (WT1) from Alligator mississippiensis (American alligator).